A 244-amino-acid chain; its full sequence is Probable Ni/Fe-hydrogenase B-type cytochrome subunit (244 aa).

Helical transmembrane passes span L39–G59, F73–M93, F150–Y171, and L204–I221.

It belongs to the HupC/HyaC/HydC family.

It localises to the cell membrane. In terms of biological role, probable b-type cytochrome. This Cupriavidus necator (strain ATCC 17699 / DSM 428 / KCTC 22496 / NCIMB 10442 / H16 / Stanier 337) (Ralstonia eutropha) protein is Probable Ni/Fe-hydrogenase B-type cytochrome subunit (hoxZ).